A 414-amino-acid chain; its full sequence is Imidazolonepropionase (414 aa).

Residues His-73 and His-75 each coordinate Fe(3+). Positions 73 and 75 each coordinate Zn(2+). Arg-82, Tyr-145, and His-178 together coordinate 4-imidazolone-5-propanoate. N-formimidoyl-L-glutamate is bound at residue Tyr-145. Position 249 (His-249) interacts with Fe(3+). His-249 contributes to the Zn(2+) binding site. Gln-252 lines the 4-imidazolone-5-propanoate pocket. Asp-324 is a binding site for Fe(3+). Position 324 (Asp-324) interacts with Zn(2+). Positions 326 and 328 each coordinate N-formimidoyl-L-glutamate. Ser-329 contacts 4-imidazolone-5-propanoate.

It belongs to the metallo-dependent hydrolases superfamily. HutI family. Zn(2+) is required as a cofactor. Fe(3+) serves as cofactor.

The protein resides in the cytoplasm. It catalyses the reaction 4-imidazolone-5-propanoate + H2O = N-formimidoyl-L-glutamate. The protein operates within amino-acid degradation; L-histidine degradation into L-glutamate; N-formimidoyl-L-glutamate from L-histidine: step 3/3. Catalyzes the hydrolytic cleavage of the carbon-nitrogen bond in imidazolone-5-propanoate to yield N-formimidoyl-L-glutamate. It is the third step in the universal histidine degradation pathway. The protein is Imidazolonepropionase of Shewanella pealeana (strain ATCC 700345 / ANG-SQ1).